The sequence spans 142 residues: Putative pre-16S rRNA nuclease (142 aa).

The protein belongs to the YqgF nuclease family.

The protein resides in the cytoplasm. Functionally, could be a nuclease involved in processing of the 5'-end of pre-16S rRNA. The polypeptide is Putative pre-16S rRNA nuclease (Prosthecochloris aestuarii (strain DSM 271 / SK 413)).